The chain runs to 50 residues: U-megalopygitoxin(9)-Mo13 (50 aa).

The N-terminal stretch at 1–23 (MKLVFLFFIVAVMVSLFVGMTEA) is a signal peptide. A disulfide bridge links cysteine 33 with cysteine 40.

Belongs to the caterpillar 9 family. Expressed by the venom apparatus.

The protein resides in the secreted. Functionally, probable toxin. The protein is U-megalopygitoxin(9)-Mo13 of Megalopyge opercularis (Southern flannel moth).